A 332-amino-acid polypeptide reads, in one-letter code: Fructose-1,6-bisphosphatase class 1 (332 aa).

Residues Glu89, Asp110, Leu112, and Asp113 each contribute to the Mg(2+) site. Residues 113–116, Asn206, Tyr239, 257–259, and Lys269 contribute to the substrate site; these read DGSS and YLY. Glu275 provides a ligand contact to Mg(2+).

Belongs to the FBPase class 1 family. As to quaternary structure, homotetramer. It depends on Mg(2+) as a cofactor.

It localises to the cytoplasm. The enzyme catalyses beta-D-fructose 1,6-bisphosphate + H2O = beta-D-fructose 6-phosphate + phosphate. The protein operates within carbohydrate biosynthesis; gluconeogenesis. In Escherichia coli (strain ATCC 8739 / DSM 1576 / NBRC 3972 / NCIMB 8545 / WDCM 00012 / Crooks), this protein is Fructose-1,6-bisphosphatase class 1.